The sequence spans 197 residues: Probable S-adenosylmethionine-dependent methyltransferase MJ0882 (197 aa).

S-adenosyl-L-methionine contacts are provided by residues 63-67 (GCGYG), aspartate 84, and asparagine 129. Residue 129-132 (NPPI) participates in substrate binding.

It belongs to the methyltransferase superfamily.

Functionally, probable methyltransferase that uses S-adenosylmethionine as the methyl donor. Binds neither NAD nor NADP in vitro. This Methanocaldococcus jannaschii (strain ATCC 43067 / DSM 2661 / JAL-1 / JCM 10045 / NBRC 100440) (Methanococcus jannaschii) protein is Probable S-adenosylmethionine-dependent methyltransferase MJ0882.